A 294-amino-acid polypeptide reads, in one-letter code: Probable 2-(5''-triphosphoribosyl)-3'-dephosphocoenzyme-A synthase (294 aa).

This sequence belongs to the CitG/MdcB family.

It catalyses the reaction 3'-dephospho-CoA + ATP = 2'-(5''-triphospho-alpha-D-ribosyl)-3'-dephospho-CoA + adenine. The sequence is that of Probable 2-(5''-triphosphoribosyl)-3'-dephosphocoenzyme-A synthase from Streptococcus pyogenes serotype M3 (strain ATCC BAA-595 / MGAS315).